Consider the following 310-residue polypeptide: Aspartate carbamoyltransferase catalytic subunit (310 aa).

2 residues coordinate carbamoyl phosphate: Arg58 and Thr59. Residue Lys87 participates in L-aspartate binding. Carbamoyl phosphate-binding residues include Arg108, His136, and Gln139. 2 residues coordinate L-aspartate: Arg169 and Arg229. Carbamoyl phosphate-binding residues include Leu268 and Pro269.

This sequence belongs to the aspartate/ornithine carbamoyltransferase superfamily. ATCase family. In terms of assembly, heterododecamer (2C3:3R2) of six catalytic PyrB chains organized as two trimers (C3), and six regulatory PyrI chains organized as three dimers (R2).

The enzyme catalyses carbamoyl phosphate + L-aspartate = N-carbamoyl-L-aspartate + phosphate + H(+). It functions in the pathway pyrimidine metabolism; UMP biosynthesis via de novo pathway; (S)-dihydroorotate from bicarbonate: step 2/3. Catalyzes the condensation of carbamoyl phosphate and aspartate to form carbamoyl aspartate and inorganic phosphate, the committed step in the de novo pyrimidine nucleotide biosynthesis pathway. The protein is Aspartate carbamoyltransferase catalytic subunit of Leptospira biflexa serovar Patoc (strain Patoc 1 / Ames).